We begin with the raw amino-acid sequence, 565 residues long: Estrogen receptor gamma (565 aa).

The tract at residues 1-168 (MAVASSPEKD…TSGGKTDLHY (168 aa)) is modulating. 2 NR C4-type zinc fingers span residues 169–189 (CAVCHDYASGYHYGVWSCEGC) and 205–229 (CPATNECTIDKNRRKSCQACRLRKC). Positions 169–234 (CAVCHDYASG…RLRKCYEVGM (66 aa)) form a DNA-binding region, nuclear receptor. Residues 235-285 (TKCGMRKERGNYRSPQMRRMTRLTSQGRTDSSSVLTGSAVVSLNAPQPSAL) are hinge. The NR LBD domain occupies 286-516 (TSEQLIERLM…DLLLEMLDAH (231 aa)). The interval 522–565 (RLPRRSPEQEPEDQADAPAPPHSSGSGPSYTWTPSSSEGAGEPQ) is disordered.

Belongs to the nuclear hormone receptor family. NR3 subfamily. In terms of assembly, homodimer. Abundant in the ovary and testes, barely detectable in the brain and muscle and undetectable in the liver.

The protein resides in the nucleus. The steroid hormones and their receptors are involved in the regulation of eukaryotic gene expression and affect cellular proliferation and differentiation in target tissues. The sequence is that of Estrogen receptor gamma (esr3) from Micropogonias undulatus (Atlantic croaker).